The primary structure comprises 293 residues: Elongation factor Ts (293 aa).

The interval 79 to 82 (TDFV) is involved in Mg(2+) ion dislocation from EF-Tu.

It belongs to the EF-Ts family.

It is found in the cytoplasm. Associates with the EF-Tu.GDP complex and induces the exchange of GDP to GTP. It remains bound to the aminoacyl-tRNA.EF-Tu.GTP complex up to the GTP hydrolysis stage on the ribosome. This is Elongation factor Ts from Exiguobacterium sibiricum (strain DSM 17290 / CCUG 55495 / CIP 109462 / JCM 13490 / 255-15).